A 289-amino-acid polypeptide reads, in one-letter code: ATP phosphoribosyltransferase (289 aa).

Belongs to the ATP phosphoribosyltransferase family. Long subfamily. Mg(2+) serves as cofactor.

The protein localises to the cytoplasm. It carries out the reaction 1-(5-phospho-beta-D-ribosyl)-ATP + diphosphate = 5-phospho-alpha-D-ribose 1-diphosphate + ATP. It functions in the pathway amino-acid biosynthesis; L-histidine biosynthesis; L-histidine from 5-phospho-alpha-D-ribose 1-diphosphate: step 1/9. With respect to regulation, feedback inhibited by histidine. Functionally, catalyzes the condensation of ATP and 5-phosphoribose 1-diphosphate to form N'-(5'-phosphoribosyl)-ATP (PR-ATP). Has a crucial role in the pathway because the rate of histidine biosynthesis seems to be controlled primarily by regulation of HisG enzymatic activity. The chain is ATP phosphoribosyltransferase from Koribacter versatilis (strain Ellin345).